Here is a 1595-residue protein sequence, read N- to C-terminus: MHRGLNLLLILCALAPHVLGPASGLPTEGRAGLDIVHPVRVDAGGSFLSYELWPRVLRKRDVSAAQASSAFYQLQYQGRELLFNLTTNPYLLAPGFVSEIRRRSNLSNVHIQTSVPTCHLLGDVQDPELEGGFAAISACDGLRGVFQLSNEDYFIEPLDEVPAQPGHAQPHMVYKHKRSGQQDDSRTSGTCGVQGSPELKHQREHWEQRQQKRRQQRSISKEKWVETLVVADSKMVEYHGQPQVESYVLTIMNMVAGLYHDPSIGNPIHITVVRLIILEDEEKDLKITHHADDTLKNFCRWQKNVNMKGDDHPQHHDTAILLTRKDLCATMNHPCETLGLSHVAGLCHPQLSCSVSEDTGLPLAFTVAHELGHSFGIQHDGTGNDCESIGKRPFIMSPQLLYDRGIPLTWSRCSREYITRFLDRGWGLCLDDRPSKGVINFPSVLPGVLYDVNHQCRLQYGPSSAYCEDVDNVCYTLWCSVGTTCHSKMDAAVDGTSCGKNKWCLNGECVPEGFQPETVDGGWSGWSAWSVCSRSCGVGVRSSERQCTQPVPKNKGKYCVGERKRYRLCNLQACPPDRPSFRHTQCSQFDSMLYKGKLHKWVPVLNDENPCELHCRPFNYSNREKLRDAVMDGTPCYQGRISRDICIDGICKKVGCDFELDSGAEEDRCGVCRGDGSTCHTVSRTFKEAEGMGYVDVGLIPAGAREILIEEVAEAANFLALRSEDPDKYFLNGGWTIQWNGDYQVAGTTFTYTRKGNWETLTSPGPTTEPVWIQLLFQERNPGVHYKYTIQRASHSEAQPPEFSWHYGPWSKCPVTCGTGVQRQSLYCMEKQAGIVDEGHCDHLSRPRDRKRKCNEEPCPARWWVGDWQPCSRSCGPGGFFRRAVFCTRSVGLDEQRALEPSACGHLPRPLAEIPCYHYVACPSSWGVGNWSQCSVTCGAGIRQRSVLCINNTGVPCDGAERPITETFCFLQPCQYSTYIVDTGASGSGSSSPELFNEVDFDPHQPVPRPSPASSPKPVSISNAIDEEDPELDPPGPVFVDDFYYDYNFINFHEDLSYGSFEESHSDLVDIGGQTVPPHIRPTEPPSDSPVPTAGAPGAEEEGIQGSWSPSPLLSEASHSPPVLLENTPVNPLANFLTEEESPIGAPELGLPSVSWPPASVDGMVTSVAPGNPDELLVREDTQSQPSTPWSDRNKLSKDGNPLGPTSPALPKSPFPTQPSSPSNSTTQASLSPDAVEVSTGWNVALDPVLEADLKPVHAPTDPGLLDQIQTPHTEGTQSPGLLPRPAQETQTNSSKDPAVQPLQPSLVEDGAPTDLLPAKNASWQVGNWSQCSTTCGLGAIWRLVRCSSGNDEDCTLSSRPQPARHCHLRPCAAWRAGNWSKCSRNCGGGSATRDVQCVDTRDLRPLRPFHCQPGPTKPPTRQLCGTQPCLPWYTSSWRECSEACGGGEQQRLVTCPEPGLCEESLRPNNTRPCNTHPCTQWVVGPWGQCSAPCGGGVQRRLVKCVNTQTGLAEEDSDLCSHEAWPESSRPCATEDCELVEPSRCERDRLPFNFCETLRLLGRCQLPTIRAQCCRSCPPLSRGVPSRGHQRVARR.

The signal sequence occupies residues M1–G20. A propeptide spanning residues P21–R217 is cleaved from the precursor. Residues N84 and N105 are each glycosylated (N-linked (GlcNAc...) asparagine). The interval P165–S218 is disordered. The Cysteine switch motif lies at G189 to S196. C191 serves as a coordination point for Zn(2+). The segment covering E198–Q210 has biased composition (basic and acidic residues). One can recognise a Peptidase M12B domain in the interval K223–P434. Intrachain disulfides connect C299–C353, C328–C335, C347–C429, C386–C413, C456–C479, C467–C485, C474–C504, C498–C509, C532–C569, C536–C574, and C547–C559. Position 369 (H369) interacts with Zn(2+). The active site involves E370. Zn(2+) contacts are provided by H373 and H379. One can recognise a Disintegrin domain in the interval V444–V519. The region spanning D520–P575 is the TSP type-1 1 domain. N-linked (GlcNAc...) asparagine glycosylation is present at N619. The tract at residues H680–Q791 is spacer. 3 TSP type-1 domains span residues P801 to P860, A861 to Y917, and C922 to Q975. 4 disordered regions span residues G989–P1035, P1077–P1121, R1179–D1234, and K1255–D1315. Pro residues-rich tracts occupy residues Q1005–S1015 and H1079–S1089. A compositionally biased stretch (low complexity) spans S1220 to S1232. A compositionally biased stretch (polar residues) spans Q1268–P1280. 4 consecutive TSP type-1 domains span residues K1320 to H1368, P1371 to L1431, W1433 to T1476, and P1478 to E1538. One can recognise a PLAC domain in the interval E1541–S1581.

In terms of assembly, interacts with COMP. It depends on Zn(2+) as a cofactor. Glycosylated. Can be O-fucosylated by POFUT2 on a serine or a threonine residue found within the consensus sequence C1-X(2)-(S/T)-C2-G of the TSP type-1 repeat domains where C1 and C2 are the first and second cysteine residue of the repeat, respectively. Fucosylated repeats can then be further glycosylated by the addition of a beta-1,3-glucose residue by the glucosyltransferase, B3GALTL. Fucosylation mediates the efficient secretion of ADAMTS family members. Can also be C-glycosylated with one or two mannose molecules on tryptophan residues within the consensus sequence W-X-X-W of the TPRs. N- and C-glycosylations can also facilitate secretion. In terms of processing, O-glycosylated proteoglycan; contains chondroitin sulfate. Post-translationally, may be cleaved by a furin endopeptidase. The precursor is sequentially processed. In terms of tissue distribution, detected in liver, ovary, kidney, testicle, lung and embryo.

It localises to the secreted. It is found in the extracellular space. The protein resides in the extracellular matrix. Functionally, metalloprotease. Was previously shown to degrade COMP. However, a later study found no activity against COMP. This chain is A disintegrin and metalloproteinase with thrombospondin motifs 7 (Adamts7), found in Rattus norvegicus (Rat).